A 167-amino-acid chain; its full sequence is Regulatory protein RecX (167 aa).

The disordered stretch occupies residues 19 to 49 (ESELRRKLASQPFSAKGHWGKQTGRSDNEPV).

It belongs to the RecX family.

Its subcellular location is the cytoplasm. Functionally, modulates RecA activity. The polypeptide is Regulatory protein RecX (Yersinia enterocolitica serotype O:8 / biotype 1B (strain NCTC 13174 / 8081)).